The chain runs to 447 residues: Phosphoglucosamine mutase (447 aa).

Residue serine 101 is the Phosphoserine intermediate of the active site. Mg(2+) is bound by residues serine 101, aspartate 242, aspartate 244, and aspartate 246. The residue at position 101 (serine 101) is a Phosphoserine.

It belongs to the phosphohexose mutase family. Mg(2+) serves as cofactor. Activated by phosphorylation.

The catalysed reaction is alpha-D-glucosamine 1-phosphate = D-glucosamine 6-phosphate. In terms of biological role, catalyzes the conversion of glucosamine-6-phosphate to glucosamine-1-phosphate. This is Phosphoglucosamine mutase from Xanthobacter autotrophicus (strain ATCC BAA-1158 / Py2).